A 360-amino-acid polypeptide reads, in one-letter code: C-C chemokine receptor type 2 (360 aa).

Residues 1–42 (MLSTSRSRFIRNTNGSGEEVTTFFDYDYGAPCHKFDVKQIGA) are Extracellular-facing. A glycan (N-linked (GlcNAc...) asparagine) is linked at Asn14. Tyr26 carries the sulfotyrosine modification. Residues 43-70 (QLLPPLYSLVFIFGFVGNMLVVLILINC) traverse the membrane as a helical segment. The Cytoplasmic segment spans residues 71–80 (KKLKSLTDIY). A helical membrane pass occupies residues 81–100 (LLNLAISDLLFLITLPLWAH). Residues 101 to 114 (SAANEWVFGNAMCK) lie on the Extracellular side of the membrane. An intrachain disulfide couples Cys113 to Cys190. A helical transmembrane segment spans residues 115-136 (LFTGLYHIGYLGGIFFIILLTI). Over 137–153 (DRYLAIVHAVFALKART) the chain is Cytoplasmic. Tyr139 is subject to Phosphotyrosine; by JAK2. Residues 154–178 (VTFGVVTSVITWLVAVFASVPGIIF) form a helical membrane-spanning segment. Topologically, residues 179–206 (TKCQEEDSVYICGPYFPRGWNNFHTIMR) are extracellular. A helical membrane pass occupies residues 207–226 (NILGLVLPLLIMVICYSGIL). The Cytoplasmic portion of the chain corresponds to 227-243 (KTLLRCRNEKKRHRAVR). Residues 244–268 (LIFTIMIVYFLFWTPYNIVILLNTF) traverse the membrane as a helical segment. The Extracellular segment spans residues 269–285 (QEFFGLSNCESTRQLDQ). Residues 286-309 (ATQVTETLGMTHCCINPIIYAFVG) traverse the membrane as a helical segment. Topologically, residues 310–360 (EKFRRYLSMFFRKYITKRFCKQCPVFYRETVDGVTSTNTPSTAEQEVSVGL) are cytoplasmic.

This sequence belongs to the G-protein coupled receptor 1 family. In terms of assembly, interacts with ARRB1. Interacts (via extracellular N-terminal region) with beta-defensin DEFB106A/DEFB106B; this interaction may preferentially require specific tyrosine sulfation on CCR2. Interacts with NUP85; the interaction is required for CCR2 clusters formation on the cell membrane and CCR2 signaling. Post-translationally, N-glycosylated. In terms of processing, sulfation increases the affinity for both monomeric and dimeric CCL2 with stronger binding to the monomeric form. Binding of sulfated CCR2 to CCL2 promotes conversion of CCL2 from dimer to monomer.

Its subcellular location is the cell membrane. In terms of biological role, key functional receptor for CCL2 but can also bind CCL7 and CCL12. Its binding with CCL2 on monocytes and macrophages mediates chemotaxis and migration induction through the activation of the PI3K cascade, the small G protein Rac and lamellipodium protrusion. Also acts as a receptor for the beta-defensin DEFB106A/DEFB106B. Regulates the expression of T-cell inflammatory cytokines and T-cell differentiation, promoting the differentiation of T-cells into T-helper 17 cells (Th17) during inflammation. Facilitates the export of mature thymocytes by enhancing directional movement of thymocytes to sphingosine-1-phosphate stimulation and up-regulation of S1P1R expression; signals through the JAK-STAT pathway to regulate FOXO1 activity leading to an increased expression of S1P1R. Plays an important role in mediating peripheral nerve injury-induced neuropathic pain. Increases NMDA-mediated synaptic transmission in both dopamine D1 and D2 receptor-containing neurons, which may be caused by MAPK/ERK-dependent phosphorylation of GRIN2B/NMDAR2B. Mediates the recruitment of macrophages and monocytes to the injury site following brain injury. In Macaca mulatta (Rhesus macaque), this protein is C-C chemokine receptor type 2 (CCR2).